Here is a 257-residue protein sequence, read N- to C-terminus: Homeobox protein goosecoid (257 aa).

Positions 160-219 (KRRHRTIFTDEQLEALENLFQETKYPDVGTREQLARKVHLREEKVEVWFKNRRAKWRRQK) form a DNA-binding region, homeobox. A disordered region spans residues 213–257 (AKWRRQKRSSSEESENAEKWNKTSSSKASPEKREEEGKSDLDSDS). The segment covering 241-257 (SPEKREEEGKSDLDSDS) has biased composition (basic and acidic residues).

This sequence belongs to the paired homeobox family. Bicoid subfamily.

The protein localises to the nucleus. Functionally, regulates chordin (CHRD). May play a role in spatial programing within discrete embryonic fields or lineage compartments during organogenesis. In concert with NKX3-2, plays a role in defining the structural components of the middle ear; required for the development of the entire tympanic ring. Probably involved in the regulatory networks that define neural crest cell fate specification and determine mesoderm cell lineages in mammals. In Saguinus labiatus (Red-chested mustached tamarin), this protein is Homeobox protein goosecoid (GSC).